The primary structure comprises 245 residues: Endo-chitosanase (245 aa).

An N-terminal signal peptide occupies residues 1 to 17 (MHFAGIVAIALATGATA).

The protein belongs to the glycosyl hydrolase 75 family.

The protein resides in the secreted. The catalysed reaction is Endohydrolysis of beta-(1-&gt;4)-linkages between D-glucosamine residues in a partly acetylated chitosan.. Functionally, chitosanase catalyzing the endo-type cleavage of chitosan, the deacylated form of chitin. Chitosanase may be crucial in the degradation of the deacetylated portion of chitin in the fungal cell wall. Chitoolisaccharides produced by the hydrolysis of partially N-acetylated chitosan are known to have many biological activities, including antibacterial activity, immune-enhancing effects, and elicitor activity. The chain is Endo-chitosanase (csn) from Aspergillus oryzae (strain ATCC 42149 / RIB 40) (Yellow koji mold).